The following is a 354-amino-acid chain: Protein RecA (354 aa).

Residue 67-74 (GPESSGKT) participates in ATP binding.

This sequence belongs to the RecA family.

The protein localises to the cytoplasm. Functionally, can catalyze the hydrolysis of ATP in the presence of single-stranded DNA, the ATP-dependent uptake of single-stranded DNA by duplex DNA, and the ATP-dependent hybridization of homologous single-stranded DNAs. It interacts with LexA causing its activation and leading to its autocatalytic cleavage. This is Protein RecA from Hamiltonella defensa subsp. Acyrthosiphon pisum (strain 5AT).